Reading from the N-terminus, the 510-residue chain is UDP-galactopyranose mutase (510 aa).

FAD contacts are provided by Thr18, Asp38, Leu46, and Gly61. Residues Gly61 and Gly62 each contribute to the UDP-alpha-D-galactose site. FAD is bound at residue His63. The NADH site is built by His68, Arg91, and Ser93. NADPH-binding residues include His68, Arg91, Ser93, and Tyr104. The UDP-alpha-D-galactose site is built by Tyr104, Gln107, Met159, Tyr162, Asn163, Trp167, and Arg182. Asn203 is an NADPH binding site. Asn207 serves as a coordination point for UDP-alpha-D-galactose. Residue Val242 coordinates FAD. The NADPH site is built by Trp315 and Tyr317. Residues Tyr317, Arg327, and Tyr419 each coordinate UDP-alpha-D-galactose. Position 327 (Arg327) interacts with FAD. NADH is bound by residues Tyr419 and Arg447. Tyr419 and Arg447 together coordinate NADPH. Position 447 (Arg447) interacts with FAD. UDP-alpha-D-galactose is bound at residue Tyr453. FAD-binding residues include Gly456, Asn457, and Gln458. Asn457 contributes to the UDP-alpha-D-galactose binding site. An NADH-binding site is contributed by Asn457. Position 457 (Asn457) interacts with NADPH. His460 contributes to the NADPH binding site. FAD is bound at residue Ser461.

It belongs to the UDP-galactopyranose/dTDP-fucopyranose mutase family. As to quaternary structure, homotetramer. FAD is required as a cofactor.

It catalyses the reaction UDP-alpha-D-galactose = UDP-alpha-D-galactofuranose. Functionally, UDP-galactopyranose mutase, key flavoenzyme of galactofuranose metabolism that catalyzes the 6-to-5 ring contraction of UDP-galactopyranose to UDP-galactofuranose, the donor used by various galacto-furanosyltransferases. Controls the biosynthesis of galactomannan and galactofuranose containing glycoconjugates. The flavin functions as nucleophile, forming a flavin-sugar adduct that facilitates galactose-ring opening and contraction. The binding of UDP-galactopyranose induces profound conformational changes in the enzyme and two loops on opposite sides of the active site move toward each other by over 10 Angstroms to cover the substrate and create a closed active site. The sequence is that of UDP-galactopyranose mutase from Aspergillus fumigatus (Neosartorya fumigata).